The chain runs to 438 residues: 2-(3-amino-3-carboxypropyl)histidine synthase subunit 1 (438 aa).

A disordered region spans residues 7-29 (SGAAEQGGRDGPGRGRAPRGRVA). Residues Cys-110, Cys-214, and Cys-342 each contribute to the [4Fe-4S] cluster site. The disordered stretch occupies residues 391-421 (VNHGQDRRPHAPGRPARGKVQEGSARPPSAV).

This sequence belongs to the DPH1/DPH2 family. DPH1 subfamily. Component of the 2-(3-amino-3-carboxypropyl)histidine synthase complex composed of DPH1, DPH2, DPH3 and a NADH-dependent reductase. Interacts with DPH2. Interacts with RBM8A. [4Fe-4S] cluster is required as a cofactor. Expressed in heart, brain, placenta, lung, liver, skeletal muscle, kidney, pancreas, spleen, thymus, mammary gland, colon, small intestine, testis and ovary. Reduced expression in primary breast and ovarian tumors.

The protein resides in the nucleus. It is found in the cytoplasm. It carries out the reaction L-histidyl-[translation elongation factor 2] + S-adenosyl-L-methionine = 2-[(3S)-amino-3-carboxypropyl]-L-histidyl-[translation elongation factor 2] + S-methyl-5'-thioadenosine + H(+). The protein operates within protein modification; peptidyl-diphthamide biosynthesis. Its function is as follows. Catalyzes the first step of diphthamide biosynthesis, a post-translational modification of histidine which occurs in elongation factor 2. DPH1 and DPH2 transfer a 3-amino-3-carboxypropyl (ACP) group from S-adenosyl-L-methionine (SAM) to a histidine residue, the reaction is assisted by a reduction system comprising DPH3 and a NADH-dependent reductase. Acts as a tumor suppressor. The polypeptide is 2-(3-amino-3-carboxypropyl)histidine synthase subunit 1 (Homo sapiens (Human)).